Here is a 656-residue protein sequence, read N- to C-terminus: Bifunctional protein ThiO/ThiG (656 aa).

The segment at 1-395 (MQTTSDVLII…HAAENSEGSK (395 aa)) is thiO. FAD is bound by residues 7–21 (VLII…AIAV) and 48–50 (AGM). E56 lines the glycine pocket. FAD is bound at residue V169. Glycine is bound by residues R298 and R324. An FAD-binding site is contributed by 322-328 (HYRNGIL). Residues 396–656 (DLLEIAGRKF…ASSPLTGLVG (261 aa)) form a thiG region. The active-site Schiff-base intermediate with DXP is K498. 1-deoxy-D-xylulose 5-phosphate-binding positions include G559, 585–586 (AG), and 607–608 (NS).

This sequence in the N-terminal section; belongs to the DAO family. ThiO subfamily. In the C-terminal section; belongs to the ThiG family. As to quaternary structure, interacts with ThiH and ThiS. FAD serves as cofactor.

It is found in the cytoplasm. It carries out the reaction glycine + O2 + H2O = glyoxylate + H2O2 + NH4(+). The catalysed reaction is [ThiS sulfur-carrier protein]-C-terminal-Gly-aminoethanethioate + 2-iminoacetate + 1-deoxy-D-xylulose 5-phosphate = [ThiS sulfur-carrier protein]-C-terminal Gly-Gly + 2-[(2R,5Z)-2-carboxy-4-methylthiazol-5(2H)-ylidene]ethyl phosphate + 2 H2O + H(+). It participates in cofactor biosynthesis; thiamine diphosphate biosynthesis. Functionally, catalyzes the FAD-dependent oxidative deamination of glycine. Is essential for thiamine biosynthesis since the oxidation of glycine catalyzed by ThiO generates the glycine imine intermediate (dehydroglycine) required for the biosynthesis of the thiazole ring of thiamine pyrophosphate. Catalyzes the rearrangement of 1-deoxy-D-xylulose 5-phosphate (DXP) to produce the thiazole phosphate moiety of thiamine. Sulfur is provided by the thiocarboxylate moiety of the carrier protein ThiS. In vitro, sulfur can be provided by H(2)S. The sequence is that of Bifunctional protein ThiO/ThiG (thiO/thiG) from Synechocystis sp. (strain ATCC 27184 / PCC 6803 / Kazusa).